A 97-amino-acid polypeptide reads, in one-letter code: Co-chaperonin GroES (97 aa).

The protein belongs to the GroES chaperonin family. Heptamer of 7 subunits arranged in a ring. Interacts with the chaperonin GroEL.

Its subcellular location is the cytoplasm. In terms of biological role, together with the chaperonin GroEL, plays an essential role in assisting protein folding. The GroEL-GroES system forms a nano-cage that allows encapsulation of the non-native substrate proteins and provides a physical environment optimized to promote and accelerate protein folding. GroES binds to the apical surface of the GroEL ring, thereby capping the opening of the GroEL channel. This Klebsiella aerogenes (Enterobacter aerogenes) protein is Co-chaperonin GroES.